The primary structure comprises 231 residues: Cytochrome c oxidase subunit 2 (231 aa).

The Mitochondrial intermembrane segment spans residues 1–30 (MNNFFQGYNLLFQHSLFASYMDWFHAFNCS). The chain crosses the membrane as a helical span at residues 31 to 51 (LLLGVLVFVTLLFGYLIFSTF). Topologically, residues 52–64 (YFKSKKIEYQFGE) are mitochondrial matrix. The chain crosses the membrane as a helical span at residues 65–85 (LLCSIFPTIILLMQMVPSLSL). At 86-231 (LYYYGLMNLD…FKSWCFGTME (146 aa)) the chain is on the mitochondrial intermembrane side. Positions 164, 199, 201, 203, 207, and 210 each coordinate Cu cation. Glutamate 201 is a Mg(2+) binding site.

It belongs to the cytochrome c oxidase subunit 2 family. As to quaternary structure, component of the cytochrome c oxidase (complex IV, CIV), a multisubunit enzyme composed of a catalytic core of 3 subunits and several supernumerary subunits. The complex exists as a monomer or a dimer and forms supercomplexes (SCs) in the inner mitochondrial membrane with ubiquinol-cytochrome c oxidoreductase (cytochrome b-c1 complex, complex III, CIII). The cofactor is Cu cation.

It is found in the mitochondrion inner membrane. It carries out the reaction 4 Fe(II)-[cytochrome c] + O2 + 8 H(+)(in) = 4 Fe(III)-[cytochrome c] + 2 H2O + 4 H(+)(out). Functionally, component of the cytochrome c oxidase, the last enzyme in the mitochondrial electron transport chain which drives oxidative phosphorylation. The respiratory chain contains 3 multisubunit complexes succinate dehydrogenase (complex II, CII), ubiquinol-cytochrome c oxidoreductase (cytochrome b-c1 complex, complex III, CIII) and cytochrome c oxidase (complex IV, CIV), that cooperate to transfer electrons derived from NADH and succinate to molecular oxygen, creating an electrochemical gradient over the inner membrane that drives transmembrane transport and the ATP synthase. Cytochrome c oxidase is the component of the respiratory chain that catalyzes the reduction of oxygen to water. Electrons originating from reduced cytochrome c in the intermembrane space (IMS) are transferred via the dinuclear copper A center (CU(A)) of subunit 2 and heme A of subunit 1 to the active site in subunit 1, a binuclear center (BNC) formed by heme A3 and copper B (CU(B)). The BNC reduces molecular oxygen to 2 water molecules using 4 electrons from cytochrome c in the IMS and 4 protons from the mitochondrial matrix. This is Cytochrome c oxidase subunit 2 (cox-2) from Caenorhabditis briggsae.